The primary structure comprises 465 residues: Soluble pyridine nucleotide transhydrogenase (465 aa).

35 to 44 (ERYNNVGGGC) lines the FAD pocket.

Belongs to the class-I pyridine nucleotide-disulfide oxidoreductase family. Requires FAD as cofactor.

It is found in the cytoplasm. It carries out the reaction NAD(+) + NADPH = NADH + NADP(+). In terms of biological role, conversion of NADPH, generated by peripheral catabolic pathways, to NADH, which can enter the respiratory chain for energy generation. The sequence is that of Soluble pyridine nucleotide transhydrogenase from Photorhabdus laumondii subsp. laumondii (strain DSM 15139 / CIP 105565 / TT01) (Photorhabdus luminescens subsp. laumondii).